The sequence spans 1159 residues: Anillin-like protein 1 (1159 aa).

5 disordered regions span residues 43 to 81 (VASPTKVFGSSSKCNDGPSTPVHFHPQEPKETTPNMKEN), 266 to 327 (QQVS…TKTT), 409 to 430 (KLKKSSSANVTAPPAPTSAPVP), 549 to 608 (AIPK…GDVI), and 629 to 699 (FGFM…KSSS). Positions 50-60 (FGSSSKCNDGP) are enriched in polar residues. The span at 287–327 (ASSATSSSSSTTTLTTISGASGSTTSGISNAPQDSASTKTT) shows a compositional bias: low complexity. Residues 421 to 430 (PPAPTSAPVP) show a composition bias toward pro residues. The span at 564-584 (SASSLYSQGARSNTASPASKS) shows a compositional bias: polar residues. Over residues 660–684 (VIEEETENEDESEPYEPEEEEDDDA) the composition is skewed to acidic residues. Positions 1029-1147 (DITYHGFLSM…WLSLINSTSK (119 aa)) constitute a PH domain.

In terms of tissue distribution, strongly expressed in dividing neuroblasts under the ventral epidermal cells during ventral enclosure.

The protein resides in the cytoplasm. Its subcellular location is the cell cortex. It is found in the cytoskeleton. The protein localises to the spindle. It localises to the midbody. The protein resides in the cleavage furrow. Its function is as follows. Required for contractile events in embryos that occur prior to mitosis, such as cortical ruffling and pseudocleavage. Promotes membrane ruffling by organizing cortical patches of septins and myosin II. Not generally required for cytokinesis in mitotic cells. Required for the asymmetric cleavage events that extrude the two polar bodies during oocyte meiosis. Not required for meiotic contractile ring assembly, initiation or closure but is required for the transformation of the contractile ring from a disk above the spindle to a tube around the spindle midzone. Promotes astral microtubule-directed cortical myosin polarization and cleavage furrow ingression. Regulates neuroblast cytokinesis during mid- to late-embryogenesis and is required for ventral enclosure. The sequence is that of Anillin-like protein 1 (ani-1) from Caenorhabditis elegans.